Consider the following 239-residue polypeptide: Ribonuclease 3 (239 aa).

The 123-residue stretch at His-11–Asp-133 folds into the RNase III domain. Glu-46 serves as a coordination point for Mg(2+). Asp-50 is a catalytic residue. Residues Asp-119 and Glu-122 each contribute to the Mg(2+) site. The active site involves Glu-122. A DRBM domain is found at Asp-160–Glu-230.

The protein belongs to the ribonuclease III family. In terms of assembly, homodimer. The cofactor is Mg(2+).

Its subcellular location is the cytoplasm. It carries out the reaction Endonucleolytic cleavage to 5'-phosphomonoester.. Its function is as follows. Digests double-stranded RNA. Involved in the processing of primary rRNA transcript to yield the immediate precursors to the large and small rRNAs (23S and 16S). Processes some mRNAs, and tRNAs when they are encoded in the rRNA operon. Processes pre-crRNA and tracrRNA of type II CRISPR loci if present in the organism. This Neisseria gonorrhoeae (strain NCCP11945) protein is Ribonuclease 3.